Consider the following 1405-residue polypeptide: DNA-directed RNA polymerase subunit beta' (1405 aa).

The Zn(2+) site is built by C70, C72, C85, and C88. The Mg(2+) site is built by D460, D462, and D464. The Zn(2+) site is built by C815, C890, C897, and C900.

The protein belongs to the RNA polymerase beta' chain family. As to quaternary structure, the RNAP catalytic core consists of 2 alpha, 1 beta, 1 beta' and 1 omega subunit. When a sigma factor is associated with the core the holoenzyme is formed, which can initiate transcription. Mg(2+) serves as cofactor. Requires Zn(2+) as cofactor.

It catalyses the reaction RNA(n) + a ribonucleoside 5'-triphosphate = RNA(n+1) + diphosphate. Functionally, DNA-dependent RNA polymerase catalyzes the transcription of DNA into RNA using the four ribonucleoside triphosphates as substrates. The polypeptide is DNA-directed RNA polymerase subunit beta' (Xanthomonas campestris pv. campestris (strain 8004)).